We begin with the raw amino-acid sequence, 141 residues long: Nucleoside diphosphate kinase (141 aa).

Lys11, Phe59, Arg87, Thr93, Arg104, and Asn114 together coordinate ATP. His117 (pros-phosphohistidine intermediate) is an active-site residue.

The protein belongs to the NDK family. Homotetramer. The cofactor is Mg(2+).

It localises to the cytoplasm. It carries out the reaction a 2'-deoxyribonucleoside 5'-diphosphate + ATP = a 2'-deoxyribonucleoside 5'-triphosphate + ADP. The enzyme catalyses a ribonucleoside 5'-diphosphate + ATP = a ribonucleoside 5'-triphosphate + ADP. Major role in the synthesis of nucleoside triphosphates other than ATP. The ATP gamma phosphate is transferred to the NDP beta phosphate via a ping-pong mechanism, using a phosphorylated active-site intermediate. The chain is Nucleoside diphosphate kinase from Bordetella bronchiseptica (strain ATCC BAA-588 / NCTC 13252 / RB50) (Alcaligenes bronchisepticus).